Here is a 1019-residue protein sequence, read N- to C-terminus: UPF0182 protein Krad_1193 (1019 aa).

A run of 7 helical transmembrane segments spans residues 19-39 (GAAL…VVGA), 61-81 (LWLQ…AVAV), 115-135 (RLVV…VAMS), 169-189 (WLAF…IAGL), 213-233 (VHLA…YWLD), 264-284 (AILA…AVGT), and 291-311 (IGTG…PWAV). 2 disordered regions span residues 897 to 934 (GNSG…ATGD) and 977 to 1019 (DAAS…TPTP). Positions 977 to 1005 (DAASAAEARLERSGTSGPTSSSSPSASSA) are enriched in low complexity. Pro residues predominate over residues 1006–1019 (PPVPGETPAATPTP).

The protein belongs to the UPF0182 family.

The protein resides in the cell membrane. This is UPF0182 protein Krad_1193 from Kineococcus radiotolerans (strain ATCC BAA-149 / DSM 14245 / SRS30216).